The primary structure comprises 117 residues: Large ribosomal subunit protein uL18 (117 aa).

It belongs to the universal ribosomal protein uL18 family. As to quaternary structure, part of the 50S ribosomal subunit; part of the 5S rRNA/L5/L18/L25 subcomplex. Contacts the 5S and 23S rRNAs.

Functionally, this is one of the proteins that bind and probably mediate the attachment of the 5S RNA into the large ribosomal subunit, where it forms part of the central protuberance. In Colwellia psychrerythraea (strain 34H / ATCC BAA-681) (Vibrio psychroerythus), this protein is Large ribosomal subunit protein uL18.